The sequence spans 325 residues: Beta-ketoacyl-[acyl-carrier-protein] synthase III (325 aa).

Active-site residues include Cys112 and His250. Residues 251–255 (QANIR) form an ACP-binding region. Asn280 is a catalytic residue.

Belongs to the thiolase-like superfamily. FabH family. As to quaternary structure, homodimer.

The protein localises to the cytoplasm. It carries out the reaction malonyl-[ACP] + acetyl-CoA + H(+) = 3-oxobutanoyl-[ACP] + CO2 + CoA. Its pathway is lipid metabolism; fatty acid biosynthesis. In terms of biological role, catalyzes the condensation reaction of fatty acid synthesis by the addition to an acyl acceptor of two carbons from malonyl-ACP. Catalyzes the first condensation reaction which initiates fatty acid synthesis and may therefore play a role in governing the total rate of fatty acid production. Possesses both acetoacetyl-ACP synthase and acetyl transacylase activities. Its substrate specificity determines the biosynthesis of branched-chain and/or straight-chain of fatty acids. This chain is Beta-ketoacyl-[acyl-carrier-protein] synthase III, found in Streptococcus mutans serotype c (strain ATCC 700610 / UA159).